The chain runs to 1374 residues: DNA-directed RNA polymerase subunit beta (1374 aa).

The protein belongs to the RNA polymerase beta chain family. In terms of assembly, the RNAP catalytic core consists of 2 alpha, 1 beta, 1 beta' and 1 omega subunit. When a sigma factor is associated with the core the holoenzyme is formed, which can initiate transcription.

The catalysed reaction is RNA(n) + a ribonucleoside 5'-triphosphate = RNA(n+1) + diphosphate. DNA-dependent RNA polymerase catalyzes the transcription of DNA into RNA using the four ribonucleoside triphosphates as substrates. The polypeptide is DNA-directed RNA polymerase subunit beta (Paracidovorax citrulli (strain AAC00-1) (Acidovorax citrulli)).